Consider the following 101-residue polypeptide: Large ribosomal subunit protein uL23 (101 aa).

This sequence belongs to the universal ribosomal protein uL23 family. In terms of assembly, part of the 50S ribosomal subunit. Contacts protein L29, and trigger factor when it is bound to the ribosome.

Functionally, one of the early assembly proteins it binds 23S rRNA. One of the proteins that surrounds the polypeptide exit tunnel on the outside of the ribosome. Forms the main docking site for trigger factor binding to the ribosome. The sequence is that of Large ribosomal subunit protein uL23 from Nocardia farcinica (strain IFM 10152).